The primary structure comprises 455 residues: tRNA modification GTPase MnmE (455 aa).

Residues Arg22, Glu85, and Arg124 each coordinate (6S)-5-formyl-5,6,7,8-tetrahydrofolate. Residues 220–377 (GIYTVIVGRP…VEKAIKEAIL (158 aa)) form the TrmE-type G domain. Residue Asn230 participates in K(+) binding. GTP contacts are provided by residues 230–235 (NVGKSS), 249–255 (TDIPGTT), and 274–277 (DTAG). Residue Ser234 coordinates Mg(2+). Thr249, Ile251, and Thr254 together coordinate K(+). Residue Thr255 participates in Mg(2+) binding. Residue Lys455 participates in (6S)-5-formyl-5,6,7,8-tetrahydrofolate binding.

The protein belongs to the TRAFAC class TrmE-Era-EngA-EngB-Septin-like GTPase superfamily. TrmE GTPase family. Homodimer. Heterotetramer of two MnmE and two MnmG subunits. K(+) is required as a cofactor.

The protein resides in the cytoplasm. In terms of biological role, exhibits a very high intrinsic GTPase hydrolysis rate. Involved in the addition of a carboxymethylaminomethyl (cmnm) group at the wobble position (U34) of certain tRNAs, forming tRNA-cmnm(5)s(2)U34. The polypeptide is tRNA modification GTPase MnmE (Caldicellulosiruptor saccharolyticus (strain ATCC 43494 / DSM 8903 / Tp8T 6331)).